The primary structure comprises 184 residues: Large ribosomal subunit protein uL6 (184 aa).

Belongs to the universal ribosomal protein uL6 family. In terms of assembly, part of the 50S ribosomal subunit.

In terms of biological role, this protein binds to the 23S rRNA, and is important in its secondary structure. It is located near the subunit interface in the base of the L7/L12 stalk, and near the tRNA binding site of the peptidyltransferase center. The protein is Large ribosomal subunit protein uL6 of Cytophaga hutchinsonii (strain ATCC 33406 / DSM 1761 / CIP 103989 / NBRC 15051 / NCIMB 9469 / D465).